Here is a 215-residue protein sequence, read N- to C-terminus: UPF0323 lipoprotein jhp_0217 (215 aa).

Positions 1–27 (MKKPYRKISDYAIVGGLSALVMVSIVG) are cleaved as a signal peptide. Cys28 carries the N-palmitoyl cysteine lipid modification. A lipid anchor (S-diacylglycerol cysteine) is attached at Cys28. Polar residues predominate over residues 158–169 (QRTYKSPQAYQR). The interval 158 to 215 (QRTYKSPQAYQRSQNSFSKSAPSASSMGTASKGQSGFFGSSRPTSSPAISSGTRGFNA) is disordered. Residues 170–183 (SQNSFSKSAPSASS) show a composition bias toward low complexity. Residues 184–195 (MGTASKGQSGFF) are compositionally biased toward polar residues. The segment covering 197–208 (SSRPTSSPAISS) has biased composition (low complexity).

Belongs to the UPF0323 family.

It localises to the cell membrane. The sequence is that of UPF0323 lipoprotein jhp_0217 from Helicobacter pylori (strain J99 / ATCC 700824) (Campylobacter pylori J99).